The chain runs to 639 residues: Extracellular metalloproteinase 9 (639 aa).

Positions 1-19 (MHGLLLAAGLLSLPLRALG) are cleaved as a signal peptide. Residues 20–250 (HPNPNPQMHT…IHGVVDYVAD (231 aa)) constitute a propeptide that is removed on maturation. Asn278 is a glycosylation site (N-linked (GlcNAc...) asparagine). The disordered stretch occupies residues 293-312 (PTTRGNNGIAQDNPSGGNQY). His434 is a Zn(2+) binding site. Glu435 is a catalytic residue. Position 438 (His438) interacts with Zn(2+).

Belongs to the peptidase M36 family. The cofactor is Zn(2+).

The protein localises to the secreted. Functionally, secreted metalloproteinase that allows assimilation of proteinaceous substrates and probably acts as a virulence factor. This Coccidioides posadasii (strain C735) (Valley fever fungus) protein is Extracellular metalloproteinase 9 (MEP9).